Consider the following 121-residue polypeptide: MTLRARGARLLGGLLFFTLLAAGAAPLSWDLPEPRSRAGKIRVHPRGNLWATGHFMGKKSLEPPNPSLLGTTHHISLRDQRLQLSHDLLRILLQKKALGLSLSGPASHTPYRRLLVQTLEK.

The first 24 residues, 1–24, serve as a signal peptide directing secretion; sequence MTLRARGARLLGGLLFFTLLAAGA. The residue at position 56 (M56) is a Methionine amide. The propeptide occupies 60–121; sequence SLEPPNPSLL…RRLLVQTLEK (62 aa).

This sequence belongs to the bombesin/neuromedin-B/ranatensin family. In terms of tissue distribution, higher expression in the central nervous system (CNS) than in peripheral tissues. Highest levels are found in the olfactory bulb. Relatively high levels in the CNS (including the cerebral cortex, cerebellum, spinal cord, medulla oblongata, midbrain, hypothalamus, hippocampus, and hypophysis) and in peripheral tissues such as the pancreas, adrenal gland, testis, ovary and cecum. Moderate levels are found in the rectum, heart and pons with low expression levels detected in the bone marrow and duodenum. Other tissues show no or low levels of expression.

The protein localises to the secreted. The protein resides in the cell projection. It localises to the neuron projection. Stimulates smooth muscle contraction. Induces sighing by acting directly on the pre-Botzinger complex, a cluster of several thousand neurons in the ventrolateral medulla responsible for inspiration during respiratory activity. Contributes to the induction of sneezing following exposure to chemical irritants or allergens which causes release of NMB by nasal sensory neurons and activation of NMBR-expressing neurons in the sneeze-evoking region of the brainstem. These in turn activate neurons of the caudal ventral respiratory group, giving rise to the sneezing response. Contributes to induction of acute itch, possibly through activation of the NMBR receptor on dorsal root ganglion neurons. Increases expression of NMBR and steroidogenic mediators STAR, CYP11A1 and HSD3B1 in Leydig cells, induces secretion of testosterone by Leydig cells and also promotes Leydig cell proliferation. Plays a role in the innate immune response to influenza A virus infection by enhancing interferon alpha expression and reducing expression of IL6. Plays a role in CSF1-induced proliferation of osteoclast precursors by contributing to positive regulation of the expression of the CSF1 receptor CSF1R. In Sus scrofa (Pig), this protein is Neuromedin-B (NMB).